Reading from the N-terminus, the 482-residue chain is MSIPLILASKSKPRRDVLYSAGICPTIRVSHVDEPAALEAAAREEGVTVDDLSIKQRVMILAVAKAEAVHRAYRDVADTAAAATGDRVIAYPLKAKEIKDSEREAAVEDLREAAAGKPIDYSKAEIATTRDFSGIDMPTVTEPIATAIAGQPGLTEATVGPLILGCDSMFLLGGECYGKPHSEAVASERLKRMSGATGELWTGHCLIDFATGRTVRGASHAKVHFGEFTDADVERYIATGEPLEVAGSFTLEGFGGAFIDSIEGDPHGIIGLSLPLARHLAGELGITWTDLWNVGRGELEPESKASGNQHAGILPPVENVHQPGDGWVDCACGRKHWGTNGASGILLARRDPVSGKVTHVVMQHRAAWSAEGGTWGIPGGATADGESPIEGALRESYEEANITPEDIEVVGSYREDHGPWAYTTVFAFEKPGHTVEPKANDDESMEICWVPIDDVPNRKLLTAMKTDWPRFAARLDELATAQ.

A maf-like region spans residues 1-299 (MSIPLILASK…DLWNVGRGEL (299 aa)). Residue Asp-167 is the Proton acceptor of the active site. Positions 338 to 475 (GTNGASGILL…TDWPRFAARL (138 aa)) constitute a Nudix hydrolase domain.

In the N-terminal section; belongs to the Maf family. Requires a divalent metal cation as cofactor.

Its subcellular location is the cytoplasm. The enzyme catalyses a ribonucleoside 5'-triphosphate + H2O = a ribonucleoside 5'-phosphate + diphosphate + H(+). It carries out the reaction a 2'-deoxyribonucleoside 5'-triphosphate + H2O = a 2'-deoxyribonucleoside 5'-phosphate + diphosphate + H(+). In terms of biological role, nucleoside triphosphate pyrophosphatase. May have a dual role in cell division arrest and in preventing the incorporation of modified nucleotides into cellular nucleic acids. The polypeptide is Nucleoside triphosphate pyrophosphatase/Nudix hydrolase fusion protein (Bifidobacterium longum (strain NCC 2705)).